Consider the following 98-residue polypeptide: Integration host factor subunit alpha (98 aa).

The tract at residues 49–71 is disordered; it reads FGNFDLRDKNQRPGRNPKTGEDI.

The protein belongs to the bacterial histone-like protein family. As to quaternary structure, heterodimer of an alpha and a beta chain.

In terms of biological role, this protein is one of the two subunits of integration host factor, a specific DNA-binding protein that functions in genetic recombination as well as in transcriptional and translational control. This Shewanella sp. (strain ANA-3) protein is Integration host factor subunit alpha.